A 209-amino-acid polypeptide reads, in one-letter code: tRNA (guanine-N(7)-)-methyltransferase (209 aa).

4 residues coordinate S-adenosyl-L-methionine: aspartate 35, glutamate 60, asparagine 87, and aspartate 113. Aspartate 113 is an active-site residue. Substrate contacts are provided by lysine 117 and aspartate 149.

The protein belongs to the class I-like SAM-binding methyltransferase superfamily. TrmB family.

It carries out the reaction guanosine(46) in tRNA + S-adenosyl-L-methionine = N(7)-methylguanosine(46) in tRNA + S-adenosyl-L-homocysteine. The protein operates within tRNA modification; N(7)-methylguanine-tRNA biosynthesis. Its function is as follows. Catalyzes the formation of N(7)-methylguanine at position 46 (m7G46) in tRNA. In Prochlorococcus marinus subsp. pastoris (strain CCMP1986 / NIES-2087 / MED4), this protein is tRNA (guanine-N(7)-)-methyltransferase.